The following is a 247-amino-acid chain: Coproheme decarboxylase (247 aa).

Fe-coproporphyrin III contacts are provided by residues Arg129, 143–147 (YPMDK), His170, Gln183, and Ser221. The active site involves Tyr143.

This sequence belongs to the ChdC family. Type 1 subfamily. Fe-coproporphyrin III serves as cofactor.

It catalyses the reaction Fe-coproporphyrin III + 2 H2O2 + 2 H(+) = heme b + 2 CO2 + 4 H2O. It carries out the reaction Fe-coproporphyrin III + H2O2 + H(+) = harderoheme III + CO2 + 2 H2O. The enzyme catalyses harderoheme III + H2O2 + H(+) = heme b + CO2 + 2 H2O. Its pathway is porphyrin-containing compound metabolism; protoheme biosynthesis. Functionally, involved in coproporphyrin-dependent heme b biosynthesis. Catalyzes the decarboxylation of Fe-coproporphyrin III (coproheme) to heme b (protoheme IX), the last step of the pathway. The reaction occurs in a stepwise manner with a three-propionate intermediate. The sequence is that of Coproheme decarboxylase from Bacillus cereus (strain AH820).